A 250-amino-acid polypeptide reads, in one-letter code: 5-oxoprolinase subunit A (250 aa).

It belongs to the LamB/PxpA family. In terms of assembly, forms a complex composed of PxpA, PxpB and PxpC.

It catalyses the reaction 5-oxo-L-proline + ATP + 2 H2O = L-glutamate + ADP + phosphate + H(+). In terms of biological role, catalyzes the cleavage of 5-oxoproline to form L-glutamate coupled to the hydrolysis of ATP to ADP and inorganic phosphate. In Staphylococcus aureus (strain Mu3 / ATCC 700698), this protein is 5-oxoprolinase subunit A.